We begin with the raw amino-acid sequence, 82 residues long: Large ribosomal subunit protein bL31B (82 aa).

It belongs to the bacterial ribosomal protein bL31 family. Type B subfamily. Part of the 50S ribosomal subunit.

This chain is Large ribosomal subunit protein bL31B, found in Acinetobacter baylyi (strain ATCC 33305 / BD413 / ADP1).